Consider the following 458-residue polypeptide: Tyrosine phenol-lyase (458 aa).

Lys-258 carries the N6-(pyridoxal phosphate)lysine modification.

The protein belongs to the beta-eliminating lyase family. Homotetramer. Requires pyridoxal 5'-phosphate as cofactor.

It catalyses the reaction L-tyrosine + H2O = phenol + pyruvate + NH4(+). In Pasteurella multocida (strain Pm70), this protein is Tyrosine phenol-lyase (tpl).